Here is a 539-residue protein sequence, read N- to C-terminus: MTKYIFVTGGVVSSLGKGITASSIGRLLKNRGLKVTMQKFDPYINIDPGTMNPYQHGEVFVTDDGTEADLDLGHYERLVDVRTSKYSNVTTGKIYQEVLQRERRGDYHGGTVQVIPHVTNMIKEKVMRAAQMTDTDVVISEIGGTVGDMESTPFMEAIRQMRREVGSENVMYVHVTFVPYLRAAKELKSKPTQQSVSMLRSIGIQPNMLVLRSEMPVPQEMKDKISTFTDVPVDYIVESLDAPSLFDVPLSYQEQGVDQKVVDFLHIDSPKPVADMDEWRRMDERAKNLKYKTKITLVGKYVELEDAYISVTDALHHAGYLYNSKIEVEKIQAEDITEDNVAELLKDTQGLIVPGGFGTRGLDGMITSIKYAREHDIPFLGICLGMQMASVEFARNVLHLEDANSAEAEPNCKNNIIDLMADQRDQEKIGGTLRLGLYPAMLKAGTKTRECYDGQEVIQERHRHRYEFNNKYREDFEKAGMTFSGISPDNHLVEIVEITDKKFFVAAQYHPEFLSRPNRPEGLFKGFIGAASGLQVDKF.

An amidoligase domain region spans residues 1–267 (MTKYIFVTGG…DQKVVDFLHI (267 aa)). Ser-13 lines the CTP pocket. Ser-13 is a UTP binding site. 14–19 (SLGKGI) contributes to the ATP binding site. Residue Tyr-54 participates in L-glutamine binding. Asp-71 serves as a coordination point for ATP. Mg(2+) contacts are provided by Asp-71 and Glu-141. Residues 148-150 (DME), 188-193 (KSKPTQ), and Lys-224 contribute to the CTP site. UTP is bound by residues 188–193 (KSKPTQ) and Lys-224. Positions 294–537 (KITLVGKYVE…IGAASGLQVD (244 aa)) constitute a Glutamine amidotransferase type-1 domain. Position 356 (Gly-356) interacts with L-glutamine. Cys-383 serves as the catalytic Nucleophile; for glutamine hydrolysis. L-glutamine contacts are provided by residues 384–387 (LGMQ), Glu-407, and Arg-465. Active-site residues include His-510 and Glu-512.

It belongs to the CTP synthase family. As to quaternary structure, homotetramer.

The enzyme catalyses UTP + L-glutamine + ATP + H2O = CTP + L-glutamate + ADP + phosphate + 2 H(+). It carries out the reaction L-glutamine + H2O = L-glutamate + NH4(+). It catalyses the reaction UTP + NH4(+) + ATP = CTP + ADP + phosphate + 2 H(+). It functions in the pathway pyrimidine metabolism; CTP biosynthesis via de novo pathway; CTP from UDP: step 2/2. With respect to regulation, allosterically activated by GTP, when glutamine is the substrate; GTP has no effect on the reaction when ammonia is the substrate. The allosteric effector GTP functions by stabilizing the protein conformation that binds the tetrahedral intermediate(s) formed during glutamine hydrolysis. Inhibited by the product CTP, via allosteric rather than competitive inhibition. Catalyzes the ATP-dependent amination of UTP to CTP with either L-glutamine or ammonia as the source of nitrogen. Regulates intracellular CTP levels through interactions with the four ribonucleotide triphosphates. The sequence is that of CTP synthase from Lactobacillus delbrueckii subsp. bulgaricus (strain ATCC 11842 / DSM 20081 / BCRC 10696 / JCM 1002 / NBRC 13953 / NCIMB 11778 / NCTC 12712 / WDCM 00102 / Lb 14).